Reading from the N-terminus, the 554-residue chain is Perforin-1 (554 aa).

Positions 1–20 (MAAYLFLLGLFLLLPRPVPA) are cleaved as a signal peptide. Cystine bridges form between Cys-22–Cys-75, Cys-30–Cys-72, and Cys-101–Cys-175. The MACPF domain maps to 26–374 (TRSECKQNHK…HYVMSRARWR (349 aa)). The chain crosses the membrane as a beta stranded span at residues 128-148 (WRAGLDVNPKPEANVHVSVAG). The N-linked (GlcNAc...) asparagine glycan is linked to Asn-204. 4 cysteine pairs are disulfide-bonded: Cys-241/Cys-407, Cys-376/Cys-392, Cys-380/Cys-394, and Cys-396/Cys-406. The chain crosses the membrane as a beta stranded span at residues 256-278 (CLSVEAQVSIGAQASVSSEYKAC). The EGF-like domain maps to 375 to 407 (DCNRPCRAGQHKSSRDSCQCVCQDSNVTNQDCC). Residues 395–513 (VCQDSNVTNQ…FHEVNCPLNH (119 aa)) form the C2 domain. Asn-400 carries an N-linked (GlcNAc...) asparagine glycan. 12 residues coordinate Ca(2+): Gly-428, Asp-429, Thr-432, Asp-435, Asn-454, Asp-483, Ala-484, Asp-485, Trp-488, Asp-489, Asp-490, and Asp-491. Cystine bridges form between Cys-496-Cys-509 and Cys-524-Cys-533. N-linked (GlcNAc...) asparagine glycosylation occurs at Asn-548.

It belongs to the complement C6/C7/C8/C9 family. Monomer, as soluble protein. Homooligomer; homooligomerizes to form a pore-forming ring. The cofactor is Ca(2+). Post-translationally, N-glycosylated. In terms of tissue distribution, detected in large granular lymphocytes and lymphokine-activated killer cells.

Its subcellular location is the cytolytic granule. It is found in the secreted. The protein localises to the cell membrane. It localises to the endosome lumen. Its function is as follows. Pore-forming protein that plays a key role in granzyme-mediated programmed cell death, and in defense against virus-infected or neoplastic cells. Can insert into the membrane of target cells in its calcium-bound form, oligomerize and form large pores. Promotes cytolysis and apoptosis of target cells by mediating the passage and uptake of cytotoxic granzymes. Facilitates the delivery of cationic cargo protein, while anionic or neural proteins are not delivered efficiently. Perforin pores allow the release of mature caspase-7 (CASP7) into the extracellular milieu. The sequence is that of Perforin-1 (Prf1) from Rattus norvegicus (Rat).